The sequence spans 1058 residues: COP1-interacting protein 7 (1058 aa).

3 disordered regions span residues 123 to 147 (LGGT…GDTV), 262 to 281 (HGNS…QEGR), and 330 to 463 (MGDV…GNDN). Polar residues-rich tracts occupy residues 126–136 (TWTSQKSTALS) and 262–276 (HGNS…SFET). Positions 340-347 (SKKKKKKK) match the Nuclear localization signal 1 motif. Over residues 340 to 353 (SKKKKKKKKNKKKS) the composition is skewed to basic residues. Acidic residues predominate over residues 403–414 (DSDESGEEEGFV). The Nuclear localization signal 2 motif lies at 431–438 (ERRHKSTS). Positions 432-446 (RRHKSTSHRQRKHKS) are enriched in basic residues. Residues 447–462 (HNGDDDSSNKETKGND) are compositionally biased toward basic and acidic residues. A Phosphoserine modification is found at S477. The disordered stretch occupies residues 708-887 (AGEQTLDGKE…KSVELSRDPS (180 aa)). Basic and acidic residues predominate over residues 757–773 (SKSEMEEERKKRMEELL). Positions 764–771 (ERKKRMEE) match the Nuclear localization signal 3 motif. The segment covering 783–808 (KSSGGSVSSSLASKKTPTVTKSVKSS) has biased composition (low complexity). Basic and acidic residues-rich tracts occupy residues 860–869 (KTEKAQEKKS) and 878–887 (KSVELSRDPS). S915, S986, and S992 each carry phosphoserine. The interval 1020–1041 (STPPATEADHSRKKWNSEETSP) is disordered. Positions 1026–1040 (EADHSRKKWNSEETS) are enriched in basic and acidic residues.

In terms of assembly, interacts with COP1.

It is found in the nucleus. Functionally, exhibits transcriptional activation activity. Positive regulator of light-regulated genes, probably being a direct downstream target of COP1 for mediating light control of gene expression. This is COP1-interacting protein 7 from Arabidopsis thaliana (Mouse-ear cress).